The sequence spans 412 residues: rRNA methyltransferase 1, mitochondrial (412 aa).

The transit peptide at 1–20 (MTSLTNAVFKRYLAVTPSAH) directs the protein to the mitochondrion.

It belongs to the class IV-like SAM-binding methyltransferase superfamily. RNA methyltransferase TrmH family.

Its subcellular location is the mitochondrion. It catalyses the reaction guanosine(2270) in 21S rRNA + S-adenosyl-L-methionine = 2'-O-methylguanosine(2270) in 21S rRNA + S-adenosyl-L-homocysteine + H(+). Functionally, S-adenosyl-L-methionine-dependent 2'-O-ribose methyltransferase that catalyzes the formation of 2'-O-methylguanosine at position 2270 (Gm2270) in the 21S mitochondrial large subunit ribosomal RNA (mtLSU rRNA), a universally conserved modification in the peptidyl transferase domain of the mtLSU rRNA. This modification seems to be important for the normal accumulation of the mitochondrial large ribosomal subunit. This Saccharomyces cerevisiae (strain ATCC 204508 / S288c) (Baker's yeast) protein is rRNA methyltransferase 1, mitochondrial.